The primary structure comprises 579 residues: Cyclin-T1-5 (579 aa).

Disordered regions lie at residues 1–27 (MAGV…HEKQ) and 271–419 (RVPA…GDAL). The span at 11-20 (YSESGVSSHS) shows a compositional bias: polar residues. Positions 274–283 (ASQGSEVESS) are enriched in low complexity. Residues 306–334 (SRQTSSVRSTHEQSNSDNHGGSSKGVLNQ) show a composition bias toward polar residues. 2 stretches are compositionally biased toward basic and acidic residues: residues 349–380 (DNKE…EAPH) and 389–414 (PGKD…RNVD). Phosphoserine is present on serine 423. Basic and acidic residues-rich tracts occupy residues 474–512 (DEKT…KNTE), 538–556 (KQSE…ESHK), and 563–579 (HHGD…NNHS). A disordered region spans residues 474–579 (DEKTKERKVQ…RRHSQENNHS (106 aa)).

It belongs to the cyclin family. Cyclin T subfamily.

The chain is Cyclin-T1-5 (CYCT1-5) from Arabidopsis thaliana (Mouse-ear cress).